Consider the following 93-residue polypeptide: Pyrimidine/purine nucleoside phosphorylase (93 aa).

This sequence belongs to the nucleoside phosphorylase PpnP family.

It carries out the reaction a purine D-ribonucleoside + phosphate = a purine nucleobase + alpha-D-ribose 1-phosphate. The enzyme catalyses adenosine + phosphate = alpha-D-ribose 1-phosphate + adenine. It catalyses the reaction cytidine + phosphate = cytosine + alpha-D-ribose 1-phosphate. The catalysed reaction is guanosine + phosphate = alpha-D-ribose 1-phosphate + guanine. It carries out the reaction inosine + phosphate = alpha-D-ribose 1-phosphate + hypoxanthine. The enzyme catalyses thymidine + phosphate = 2-deoxy-alpha-D-ribose 1-phosphate + thymine. It catalyses the reaction uridine + phosphate = alpha-D-ribose 1-phosphate + uracil. The catalysed reaction is xanthosine + phosphate = alpha-D-ribose 1-phosphate + xanthine. Catalyzes the phosphorolysis of diverse nucleosides, yielding D-ribose 1-phosphate and the respective free bases. Can use uridine, adenosine, guanosine, cytidine, thymidine, inosine and xanthosine as substrates. Also catalyzes the reverse reactions. This is Pyrimidine/purine nucleoside phosphorylase from Cellvibrio japonicus (strain Ueda107) (Pseudomonas fluorescens subsp. cellulosa).